The following is a 1347-amino-acid chain: G-protein coupled receptor-associated sorting protein 1 (1347 aa).

3 disordered regions span residues 1–75 (MTRA…AYAK), 145–174 (ESIP…SWYR), and 188–281 (DFKW…NSRS). Over residues 21–33 (ENANAAEVEPEAP) the composition is skewed to low complexity. The span at 211 to 226 (FRPRKSMKANNRFRHM) shows a compositional bias: basic residues. A compositionally biased stretch (basic and acidic residues) spans 263 to 278 (PKDKTKVWSKPKEEPN). The residue at position 295 (Ser-295) is a Phosphoserine. Disordered regions lie at residues 310–344 (GEEA…AMSG), 364–396 (FSKS…QEAR), and 460–485 (QVSS…SKSM). Over residues 316-325 (RSKPRARKGV) the composition is skewed to basic residues. A compositionally biased stretch (basic and acidic residues) spans 370–396 (KKEPRTRAVPKEEVKTKARASTKQEAR). Residues 461–484 (VSSFCLGSGKKSSMESGPKATSKS) show a composition bias toward polar residues. Ser-619 and Ser-626 each carry phosphoserine. Thr-860 is subject to Phosphothreonine. Ser-862 is subject to Phosphoserine.

Belongs to the GPRASP family. Interacts with cytoplasmic tails of a variety of G-protein coupled receptors such as delta opioid receptor/OPRD1, beta-2 adrenergic receptor/ADRB2 and D4 dopamine receptor/DRD4 as well as D2 dopamine receptor/DRD2. Interacts with PER1. Interacts with BECN2; the interaction is direct. As to expression, expressed in the brain, with higher expression in the hippocampus, hypothalamus and olfactory bulb.

It localises to the cytoplasm. In terms of biological role, modulates lysosomal sorting and functional down-regulation of a variety of G-protein coupled receptors. Targets receptors for degradation in lysosomes via its interaction with BECN2. The chain is G-protein coupled receptor-associated sorting protein 1 (Gprasp1) from Mus musculus (Mouse).